The primary structure comprises 563 residues: Arginine--tRNA ligase (563 aa).

The short motif at 120–130 (PNIAKPFHVGH) is the 'HIGH' region element.

It belongs to the class-I aminoacyl-tRNA synthetase family. As to quaternary structure, monomer.

It is found in the cytoplasm. The catalysed reaction is tRNA(Arg) + L-arginine + ATP = L-arginyl-tRNA(Arg) + AMP + diphosphate. The chain is Arginine--tRNA ligase from Clostridium acetobutylicum (strain ATCC 824 / DSM 792 / JCM 1419 / IAM 19013 / LMG 5710 / NBRC 13948 / NRRL B-527 / VKM B-1787 / 2291 / W).